A 125-amino-acid polypeptide reads, in one-letter code: Small ribosomal subunit protein uS12 (125 aa).

Aspartate 89 carries the post-translational modification 3-methylthioaspartic acid.

Belongs to the universal ribosomal protein uS12 family. Part of the 30S ribosomal subunit. Contacts proteins S8 and S17. May interact with IF1 in the 30S initiation complex.

With S4 and S5 plays an important role in translational accuracy. Functionally, interacts with and stabilizes bases of the 16S rRNA that are involved in tRNA selection in the A site and with the mRNA backbone. Located at the interface of the 30S and 50S subunits, it traverses the body of the 30S subunit contacting proteins on the other side and probably holding the rRNA structure together. The combined cluster of proteins S8, S12 and S17 appears to hold together the shoulder and platform of the 30S subunit. This Bordetella avium (strain 197N) protein is Small ribosomal subunit protein uS12.